Consider the following 373-residue polypeptide: Type 2 DNA topoisomerase 6 subunit A (373 aa).

Residues Q15–A153 enclose the Topo IIA-type catalytic domain. The active-site O-(5'-phospho-DNA)-tyrosine intermediate is Y110. E206 and D258 together coordinate Mg(2+).

Belongs to the TOP6A family. Homodimer. Heterotetramer of two Top6A and two Top6B chains. Mg(2+) is required as a cofactor.

The enzyme catalyses ATP-dependent breakage, passage and rejoining of double-stranded DNA.. Relaxes both positive and negative superturns and exhibits a strong decatenase activity. The chain is Type 2 DNA topoisomerase 6 subunit A from Methanosarcina acetivorans (strain ATCC 35395 / DSM 2834 / JCM 12185 / C2A).